A 429-amino-acid chain; its full sequence is SET domain-containing protein 14 (429 aa).

Zn(2+) is bound by residues Cys26, Cys29, Cys39, Cys42, Cys48, Cys52, His60, and Cys64. The MYND-type zinc-finger motif lies at 26-64; it reads CNQCLTSMAELKKCSACRRLAYCSQECQRADWKLHKVEC.

The protein localises to the nucleus. In Caenorhabditis elegans, this protein is SET domain-containing protein 14 (set-14).